The chain runs to 205 residues: Ribonuclease HII (205 aa).

In terms of domain architecture, RNase H type-2 spans 16-205 (VSEVGIDEVG…KSFLKKSKLI (190 aa)). Residues aspartate 22, glutamate 23, and aspartate 118 each contribute to the a divalent metal cation site.

It belongs to the RNase HII family. Requires Mn(2+) as cofactor. The cofactor is Mg(2+).

It is found in the cytoplasm. The catalysed reaction is Endonucleolytic cleavage to 5'-phosphomonoester.. Endonuclease that specifically degrades the RNA of RNA-DNA hybrids. This chain is Ribonuclease HII, found in Prochlorococcus marinus (strain AS9601).